Reading from the N-terminus, the 121-residue chain is Small ribosomal subunit protein uS13 (121 aa).

Positions 91-121 (HRRGLPVRGQKTKNNARTRKGPVKTVANKKK) are disordered.

It belongs to the universal ribosomal protein uS13 family. In terms of assembly, part of the 30S ribosomal subunit. Forms a loose heterodimer with protein S19. Forms two bridges to the 50S subunit in the 70S ribosome.

Located at the top of the head of the 30S subunit, it contacts several helices of the 16S rRNA. In the 70S ribosome it contacts the 23S rRNA (bridge B1a) and protein L5 of the 50S subunit (bridge B1b), connecting the 2 subunits; these bridges are implicated in subunit movement. Contacts the tRNAs in the A and P-sites. The polypeptide is Small ribosomal subunit protein uS13 (Staphylococcus haemolyticus (strain JCSC1435)).